We begin with the raw amino-acid sequence, 170 residues long: MEFVFYVCSFAAVVSTFFVIIQKNAVYSLVYLIISLLSIAGVFFSLGAFFAGSLEVIIYAGAIIVLFVFVIMMLNISDKYNLEEAHYLKPRFWIGPSILSLILLLSMTYAIFFLRDKKIDGFLIDSKIVGINLFGPYVFLVELSSILLLSALVVIFHIGTEKNVDKNKVL.

The next 5 membrane-spanning stretches (helical) occupy residues 1-21 (MEFVFYVCSFAAVVSTFFVII), 30-50 (VYLIISLLSIAGVFFSLGAFF), 56-76 (VIIYAGAIIVLFVFVIMMLNI), 94-114 (IGPSILSLILLLSMTYAIFFL), and 138-158 (VFLVELSSILLLSALVVIFHI).

It belongs to the complex I subunit 6 family. Composed of 13 different subunits. Subunits NuoA, H, J, K, L, M, N constitute the membrane sector of the complex.

It localises to the cell membrane. The enzyme catalyses a quinone + NADH + 5 H(+)(in) = a quinol + NAD(+) + 4 H(+)(out). Its function is as follows. NDH-1 shuttles electrons from NADH, via FMN and iron-sulfur (Fe-S) centers, to quinones in the respiratory chain. Couples the redox reaction to proton translocation (for every two electrons transferred, four hydrogen ions are translocated across the cytoplasmic membrane), and thus conserves the redox energy in a proton gradient. In Buchnera aphidicola subsp. Acyrthosiphon pisum (strain APS) (Acyrthosiphon pisum symbiotic bacterium), this protein is NADH-quinone oxidoreductase subunit J (nuoJ).